Here is a 158-residue protein sequence, read N- to C-terminus: Small ribosomal subunit protein uS15 (158 aa).

The segment covering 1–10 (MARMHTRRRG) has biased composition (basic residues). Residues 1–66 (MARMHTRRRG…EGVKGTPIPD (66 aa)) are disordered. Residues 21–32 (DPPEWSDIDADA) show a composition bias toward acidic residues. Basic and acidic residues predominate over residues 33–45 (IEERVVELAEQGH).

Belongs to the universal ribosomal protein uS15 family. As to quaternary structure, part of the 30S ribosomal subunit.

The polypeptide is Small ribosomal subunit protein uS15 (Haloquadratum walsbyi (strain DSM 16790 / HBSQ001)).